The chain runs to 306 residues: Recombination-associated protein RdgC (306 aa).

Belongs to the RdgC family.

Its subcellular location is the cytoplasm. It localises to the nucleoid. In terms of biological role, may be involved in recombination. The sequence is that of Recombination-associated protein RdgC from Pseudomonas aeruginosa (strain ATCC 15692 / DSM 22644 / CIP 104116 / JCM 14847 / LMG 12228 / 1C / PRS 101 / PAO1).